We begin with the raw amino-acid sequence, 2000 residues long: Myosin-14 (2000 aa).

Ala-2 is subject to N-acetylalanine. Thr-33 is modified (phosphothreonine). A Myosin N-terminal SH3-like domain is found at 47 to 97 (TARRMVWVPSELHGFEAAALRDEGEEEAEVELAESGRRLRLPRDQIQRMNP). Ser-56 carries the phosphoserine modification. Positions 101–804 (SKAEDMAELT…VLAQLEEERD (704 aa)) constitute a Myosin motor domain. Residue 194–201 (GESGAGKT) coordinates ATP. The tract at residues 682-704 (LSRLMATLSNTNPSFVRCIVPNH) is actin-binding. Positions 807–836 (VTDIIVSFQAAARGYLARRAFQRRQQQQSA) constitute an IQ domain. Residues 866–1951 (LQVTRQDEVL…VTTLRNRLRR (1086 aa)) are a coiled coil. Position 925 is a phosphoserine (Ser-925). Positions 1173–1197 (RGELEDTLDSTNAQQELRSKREQEV) are disordered. At Thr-1198 the chain carries Phosphothreonine. Phosphoserine is present on residues Ser-1249 and Ser-1280. Disordered regions lie at residues 1260-1311 (ELSS…AELE), 1597-1629 (HERD…RDEE), 1720-1751 (SDRA…TLEE), 1910-1942 (AEEE…NREV), and 1967-2000 (LEEG…ATPQ). Basic and acidic residues predominate over residues 1290–1304 (SDSERARSEAAEKLQ). Over residues 1720–1732 (SDRARRQAQQDRD) the composition is skewed to basic and acidic residues. The segment covering 1971-1980 (VASDEEEAEG) has biased composition (acidic residues). A phosphoserine mark is found at Ser-1973 and Ser-1985. A compositionally biased stretch (low complexity) spans 1981–1991 (AEPGSAPGQEP). Thr-1998 carries the phosphothreonine modification.

It belongs to the TRAFAC class myosin-kinesin ATPase superfamily. Myosin family. In terms of assembly, myosin is a hexameric protein that consists of 2 heavy chain subunits (MHC), 2 alkali light chain subunits (MLC) and 2 regulatory light chain subunits (MLC-2). Highest levels in lung, kidney, brain and colon, very low levels in liver and bladder and no expression in spleen or seminal vesicle (at protein level). Isoform 1 is expressed in liver, kidney and testis with low levels in skeletal muscle and heart. Isoform 1 and isoform 2 are expressed in brain and lung. Isoform 2 is the main isoform expressed in skeletal muscle and heart. Isoform 3 is limited to brain stem, cerebellum and spinal cord.

Functionally, cellular myosin that appears to play a role in cytokinesis, cell shape, and specialized functions such as secretion and capping. The sequence is that of Myosin-14 (Myh14) from Mus musculus (Mouse).